We begin with the raw amino-acid sequence, 432 residues long: UDP-N-acetylglucosamine 1-carboxyvinyltransferase (432 aa).

22-23 (KN) lines the phosphoenolpyruvate pocket. R102 provides a ligand contact to UDP-N-acetyl-alpha-D-glucosamine. Catalysis depends on C126, which acts as the Proton donor. The residue at position 126 (C126) is a 2-(S-cysteinyl)pyruvic acid O-phosphothioketal. UDP-N-acetyl-alpha-D-glucosamine-binding positions include 131 to 135 (RPVDL), D317, and I339.

The protein belongs to the EPSP synthase family. MurA subfamily.

The protein localises to the cytoplasm. It carries out the reaction phosphoenolpyruvate + UDP-N-acetyl-alpha-D-glucosamine = UDP-N-acetyl-3-O-(1-carboxyvinyl)-alpha-D-glucosamine + phosphate. The protein operates within cell wall biogenesis; peptidoglycan biosynthesis. Functionally, cell wall formation. Adds enolpyruvyl to UDP-N-acetylglucosamine. The sequence is that of UDP-N-acetylglucosamine 1-carboxyvinyltransferase from Rhodospirillum centenum (strain ATCC 51521 / SW).